Here is a 772-residue protein sequence, read N- to C-terminus: Alpha-xylosidase (772 aa).

D416 acts as the Nucleophile in catalysis. E419 is an active-site residue. The active-site Proton donor is the D482.

Belongs to the glycosyl hydrolase 31 family. Homohexamer.

It carries out the reaction Hydrolysis of terminal, non-reducing alpha-D-xylose residues with release of alpha-D-xylose.. Functionally, can catalyze the transfer of alpha-xylosyl residue from alpha-xyloside to xylose, glucose, mannose, fructose, maltose, isomaltose, nigerose, kojibiose, sucrose and trehalose. This is Alpha-xylosidase (yicI) from Escherichia coli (strain K12).